The following is a 443-amino-acid chain: Endonuclease CUE2 (443 aa).

CUE domains follow at residues 8–51 (DHES…KEND) and 55–98 (TVDN…NYET). The region spanning 347–443 (LDFHGFLPSE…YFRIEGKKKK (97 aa)) is the Smr domain.

Functionally, mRNA endonuclease involved in the No-Go Decay (NGD) pathway, which catalyzes mRNA cleavage and degradation in response to ribosome collisions. Acts downstream of the ribosome collision sensor HEL2. Specifically recognizes and binds RPS7/eS7 polyubiquitinated by MOT2/NOT4 and HEL2, promoting CUE2 recruitment to stalled ribosomes, where it mediates mRNA cleavage upstream of the colliding ribosome. Also mediates mRNA cleavage within colliding ribosomes: recruited to colliding ribosomes downstream of the RQT (ribosome quality control trigger) complex following disassembly of stalled ribosomes and cleaves mRNAs partially released from the colliding ribosome. The sequence is that of Endonuclease CUE2 from Saccharomyces cerevisiae (strain ATCC 204508 / S288c) (Baker's yeast).